Reading from the N-terminus, the 299-residue chain is Glycerol-3-phosphate dehydrogenase [NAD(P)+] (299 aa).

The NADPH site is built by Trp11, Arg30, His31, and Lys79. Positions 79, 107, and 109 each coordinate sn-glycerol 3-phosphate. Position 111 (Ala111) interacts with NADPH. Sn-glycerol 3-phosphate-binding residues include Lys161, Asp214, Ser224, Arg225, and Asn226. The active-site Proton acceptor is Lys161. Arg225 is an NADPH binding site. NADPH-binding residues include Val249 and Glu251.

This sequence belongs to the NAD-dependent glycerol-3-phosphate dehydrogenase family.

The protein resides in the cytoplasm. The catalysed reaction is sn-glycerol 3-phosphate + NAD(+) = dihydroxyacetone phosphate + NADH + H(+). It carries out the reaction sn-glycerol 3-phosphate + NADP(+) = dihydroxyacetone phosphate + NADPH + H(+). It participates in membrane lipid metabolism; glycerophospholipid metabolism. In terms of biological role, catalyzes the reduction of the glycolytic intermediate dihydroxyacetone phosphate (DHAP) to sn-glycerol 3-phosphate (G3P), the key precursor for phospholipid synthesis. The chain is Glycerol-3-phosphate dehydrogenase [NAD(P)+] from Nitratiruptor sp. (strain SB155-2).